Consider the following 273-residue polypeptide: 2-dehydro-3-deoxyphosphooctonate aldolase (273 aa).

The protein belongs to the KdsA family.

Its subcellular location is the cytoplasm. It carries out the reaction D-arabinose 5-phosphate + phosphoenolpyruvate + H2O = 3-deoxy-alpha-D-manno-2-octulosonate-8-phosphate + phosphate. It participates in carbohydrate biosynthesis; 3-deoxy-D-manno-octulosonate biosynthesis; 3-deoxy-D-manno-octulosonate from D-ribulose 5-phosphate: step 2/3. It functions in the pathway bacterial outer membrane biogenesis; lipopolysaccharide biosynthesis. The polypeptide is 2-dehydro-3-deoxyphosphooctonate aldolase (Desulfatibacillum aliphaticivorans).